The primary structure comprises 258 residues: DNA repair protein RecO (258 aa).

Belongs to the RecO family.

Involved in DNA repair and RecF pathway recombination. The sequence is that of DNA repair protein RecO from Oceanobacillus iheyensis (strain DSM 14371 / CIP 107618 / JCM 11309 / KCTC 3954 / HTE831).